Reading from the N-terminus, the 406-residue chain is Argininosuccinate synthase (406 aa).

ATP-binding positions include 11–19 (AYSGGLDTS) and Ala38. Positions 91 and 96 each coordinate L-citrulline. Gly121 contacts ATP. L-aspartate is bound by residues Thr123, Asn127, and Asp128. L-citrulline is bound at residue Asn127. Residues Arg131, Ser181, Ser190, Glu266, and Tyr278 each coordinate L-citrulline.

It belongs to the argininosuccinate synthase family. Type 1 subfamily. Homotetramer.

Its subcellular location is the cytoplasm. It catalyses the reaction L-citrulline + L-aspartate + ATP = 2-(N(omega)-L-arginino)succinate + AMP + diphosphate + H(+). Its pathway is amino-acid biosynthesis; L-arginine biosynthesis; L-arginine from L-ornithine and carbamoyl phosphate: step 2/3. In Campylobacter jejuni subsp. doylei (strain ATCC BAA-1458 / RM4099 / 269.97), this protein is Argininosuccinate synthase.